The chain runs to 125 residues: MYKLASCCLLFIGFLNPLFSLPLLDSGEVSLQLSAPHEDAPLTSEELERASLLQILPEMLLGAERGDSLRKADSSTNIFNPRGNLRKFQDFSGQDPDILLSHLLARIRKPYKKRETPDCFWKYCV.

The signal sequence occupies residues 1–20 (MYKLASCCLLFIGFLNPLFS). Residues 21 to 111 (LPLLDSGEVS…HLLARIRKPY (91 aa)) constitute a propeptide that is removed on maturation. The cysteines at positions 119 and 124 are disulfide-linked.

The protein belongs to the urotensin-2 family.

The protein localises to the secreted. Highly potent vasoconstrictor. The chain is Urotensin-2 (UTS2) from Macaca mulatta (Rhesus macaque).